The chain runs to 113 residues: Dolichyl-diphosphooligosaccharide--protein glycosyltransferase subunit DAD1 (113 aa).

At 1 to 30 (MGSSAFEVLTFFLKDYKANTPQKLKIIDAY) the chain is on the cytoplasmic side. The chain crosses the membrane as a helical span at residues 31-51 (LLYILLTGINQFLYCCLVGTF). Residue P52 is a topological domain, lumenal. A helical membrane pass occupies residues 53–73 (FNSFLSGFISCVASFVLGVCL). Topologically, residues 74–92 (RLQVNPQNSSNFCGIPPER) are cytoplasmic. Residues 93-113 (AFADFIFAHVVLHLVVMNFIG) form a helical membrane-spanning segment.

Belongs to the DAD/OST2 family. As to quaternary structure, component of the oligosaccharyltransferase (OST) complex. Widely expressed. Greatest expression seen in the epidermis, intermediate expression in the fat body and midgut and mild expression observed in the silk gland.

The protein localises to the endoplasmic reticulum membrane. The protein operates within protein modification; protein glycosylation. Functionally, subunit of the oligosaccharyl transferase (OST) complex that catalyzes the initial transfer of a defined glycan (Glc(3)Man(9)GlcNAc(2) in eukaryotes) from the lipid carrier dolichol-pyrophosphate to an asparagine residue within an Asn-X-Ser/Thr consensus motif in nascent polypeptide chains, the first step in protein N-glycosylation. N-glycosylation occurs cotranslationally and the complex associates with the Sec61 complex at the channel-forming translocon complex that mediates protein translocation across the endoplasmic reticulum (ER). All subunits are required for a maximal enzyme activity. In Araneus ventricosus (Orbweaver spider), this protein is Dolichyl-diphosphooligosaccharide--protein glycosyltransferase subunit DAD1.